A 435-amino-acid polypeptide reads, in one-letter code: Cytochrome c biogenesis protein Ccs1 (435 aa).

Helical transmembrane passes span 17 to 37 (LSLSISLLLLIASISIIGTII), 77 to 97 (NPCFVLVLVLFFCSLLACTFS), and 163 to 183 (IAPIVVHFSIILTFIGSLISL).

It belongs to the Ccs1/CcsB family. May interact with CcsA.

The protein localises to the plastid. The protein resides in the chloroplast thylakoid membrane. Its function is as follows. Required during biogenesis of c-type cytochromes (cytochrome c6 and cytochrome f) at the step of heme attachment. The protein is Cytochrome c biogenesis protein Ccs1 of Gracilaria tenuistipitata var. liui (Red alga).